The chain runs to 103 residues: ATP-dependent Clp protease adapter protein ClpS 1 (103 aa).

It belongs to the ClpS family. Binds to the N-terminal domain of the chaperone ClpA.

In terms of biological role, involved in the modulation of the specificity of the ClpAP-mediated ATP-dependent protein degradation. This is ATP-dependent Clp protease adapter protein ClpS 1 from Rhodopseudomonas palustris (strain ATCC BAA-98 / CGA009).